Here is a 323-residue protein sequence, read N- to C-terminus: MTEVLMFDALREATDEEMQNDSSVFILGEDVGHYGGSYKVTKDLHSKYGDLRVLDTPIAENSFMGMAIGAAITGLRPIVEGMNMSFLLLAFNQISNNAGMLRYTSGGNFQIPIVIRGPGGVGRQLGAEHSQRLEAYFQAIPGLKIVACSTPYNAKGLLKSAIRDNNPVIFFEHVLLYNLKDELPNDEYFLPLDKAELVRDGLDVTILTYSRMRHHVMQAVVDLVNDGYNPEVIDLISLKPLDITSIAQSLMKTHKLIIVEECMKTGGIGAEIIAQINDNYFDFLDAPIVRLSSQDIPTPYNGKLEKATVIYPQQIIEAVKSIV.

Glutamate 60 provides a ligand contact to thiamine diphosphate. Residues isoleucine 113, alanine 161, isoleucine 162, aspartate 164, and asparagine 166 each coordinate K(+).

Heterodimer of an alpha and a beta chain. Thiamine diphosphate serves as cofactor.

Its subcellular location is the plastid. It is found in the chloroplast. The enzyme catalyses N(6)-[(R)-lipoyl]-L-lysyl-[protein] + pyruvate + H(+) = N(6)-[(R)-S(8)-acetyldihydrolipoyl]-L-lysyl-[protein] + CO2. Functionally, the pyruvate dehydrogenase complex catalyzes the overall conversion of pyruvate to acetyl-CoA and CO(2). It contains multiple copies of three enzymatic components: pyruvate dehydrogenase (E1), dihydrolipoamide acetyltransferase (E2) and lipoamide dehydrogenase (E3). The protein is Pyruvate dehydrogenase E1 component subunit beta (pdhB) of Gracilaria tenuistipitata var. liui (Red alga).